The sequence spans 624 residues: Chaperone protein HtpG (624 aa).

An a; substrate-binding region spans residues 1-336 (MKGQETRGFQ…SNDLPLNVSR (336 aa)). The segment at 337 to 552 (EILQDSTVTR…ADEMSTQMAK (216 aa)) is b. A c region spans residues 553–624 (LFAAAGQSVP…IRRMNQLLVS (72 aa)).

Belongs to the heat shock protein 90 family. As to quaternary structure, homodimer.

The protein resides in the cytoplasm. Functionally, molecular chaperone. Has ATPase activity. The polypeptide is Chaperone protein HtpG (Salmonella paratyphi B (strain ATCC BAA-1250 / SPB7)).